Here is a 57-residue protein sequence, read N- to C-terminus: Large ribosomal subunit protein bL32 (57 aa).

A compositionally biased stretch (basic residues) spans 1–19; sequence MAVPKRRMSRSNTRSRRSQ. A disordered region spans residues 1–21; sequence MAVPKRRMSRSNTRSRRSQWK.

This sequence belongs to the bacterial ribosomal protein bL32 family.

This is Large ribosomal subunit protein bL32 from Mycobacteroides abscessus (strain ATCC 19977 / DSM 44196 / CCUG 20993 / CIP 104536 / JCM 13569 / NCTC 13031 / TMC 1543 / L948) (Mycobacterium abscessus).